We begin with the raw amino-acid sequence, 406 residues long: uncharacterized protein (406 aa).

Belongs to the mycobacterial PPE family.

This is an uncharacterized protein from Mycobacterium tuberculosis (strain CDC 1551 / Oshkosh).